Consider the following 125-residue polypeptide: MIKKTQGTEIRALARHIGMSAQKARRVIDQIRGCSYEQTLMILELMPYRACYPIFKLVYSAAANASHNRGLKEADLFISKAEVNEGVIVKRLKPQARGRSYPIKRPTCHITIVLSERPNFTLKNI.

Belongs to the universal ribosomal protein uL22 family. In terms of assembly, part of the 50S ribosomal subunit.

The protein resides in the plastid. The protein localises to the chloroplast. Its function is as follows. This protein binds specifically to 23S rRNA. The globular domain of the protein is located near the polypeptide exit tunnel on the outside of the subunit, while an extended beta-hairpin is found that lines the wall of the exit tunnel in the center of the 70S ribosome. The polypeptide is Large ribosomal subunit protein uL22c (rpl22) (Nuphar advena (Common spatterdock)).